Reading from the N-terminus, the 341-residue chain is Serpentine receptor class alpha-28 (341 aa).

7 consecutive transmembrane segments (helical) span residues 25–45 (FIIS…RVLL), 57–77 (LLFS…VIRL), 107–129 (YYYT…LFSF), 142–162 (ASIV…YWVF), 188–208 (VNNI…FLYI), 242–262 (IVIF…SVFI), and 275–295 (LIIS…LIIL).

Belongs to the nematode receptor-like protein sra family.

It is found in the membrane. In Caenorhabditis elegans, this protein is Serpentine receptor class alpha-28 (sra-28).